The primary structure comprises 591 residues: Glutathione hydrolase (591 aa).

Positions 1 to 41 are cleaved as a signal peptide; sequence MASKWIEEQPLVHRRDIRISSKSRIAAGLLVLLVLWRYGLP. Residue R122 coordinates L-glutamate. N-linked (GlcNAc...) asparagine glycosylation is found at N135, N270, and N389. T393 acts as the Nucleophile in catalysis. Residues T411, E432, and 464–465 contribute to the L-glutamate site; that span reads SA. N534 carries N-linked (GlcNAc...) asparagine glycosylation.

Belongs to the gamma-glutamyltransferase family.

The catalysed reaction is an N-terminal (5-L-glutamyl)-[peptide] + an alpha-amino acid = 5-L-glutamyl amino acid + an N-terminal L-alpha-aminoacyl-[peptide]. It carries out the reaction glutathione + H2O = L-cysteinylglycine + L-glutamate. It catalyses the reaction an S-substituted glutathione + H2O = an S-substituted L-cysteinylglycine + L-glutamate. It functions in the pathway mycotoxin biosynthesis. Gamma-glutamyltransferase; part of the gene cluster that mediates the biosynthesis of the secondary metabolite ustiloxin B, an antimitotic tetrapeptide. First, ustA is processed by the subtilisin-like endoprotease Kex2 that is outside the ustiloxin B gene cluster, at the C-terminal side of Arg-Lys, after transfer to Golgi apparatus through the endoplasmic reticulum (ER). Cleavage by KEX2 generates 16 peptides YAIG-I to YAIG-XVI. To process the precursor peptide further, at least two peptidases are necessary to cleave the N-terminal and C-terminal sides of the Tyr-Ala-Ile-Gly core peptide which serves as backbone for the synthesis of ustiloxin B, through cyclization and modification of the tyrosine with a non-protein coding amino acid, norvaline. One of the two peptidases must be the serine peptidase ustP; and the other pepdidase is probably ustH. Macrocyclization of the core peptide derived from ustA requires the tyrosinase ustQ, as well as the homologous oxidases ustYa and ustYb, and leads to the production of the first cyclization product N-desmethylustiloxin F. For the formation of N-desmethylustiloxin F, three oxidation steps are required, hydroxylation at the benzylic position, hydroxylation at either the aromatic ring of Tyr or beta-position of Ile, and oxidative cyclization. UstQ may catalyze the oxidation of a phenol moiety, whereas the ustYa and ustYb are most likely responsible for the remaining two-step oxidations. N-desmethylustiloxin F is then methylated by ustM to yield ustiloxin F which in turn substrate of the cytochrome P450 monooxygenase ustC which catalyzes the formation of S-deoxyustiloxin H. The flavoprotein monooxygenases ustF1 and ustF2 then participate in the modification of the side chain of S-deoxyustiloxin H, leading to the synthesis of an oxime intermediate, via ustiloxin H. Finally, carboxylative dehydration performed by the cysteine desulfurase-like protein ustD yields ustiloxin B. The protein is Glutathione hydrolase of Aspergillus flavus (strain ATCC 200026 / FGSC A1120 / IAM 13836 / NRRL 3357 / JCM 12722 / SRRC 167).